The sequence spans 517 residues: Crotonobetaine/carnitine--CoA ligase (517 aa).

The protein belongs to the ATP-dependent AMP-binding enzyme family.

It catalyses the reaction 4-(trimethylamino)butanoate + ATP + CoA = 4-(trimethylamino)butanoyl-CoA + AMP + diphosphate. The enzyme catalyses crotonobetaine + ATP + CoA = crotonobetainyl-CoA + AMP + diphosphate. It carries out the reaction (R)-carnitine + ATP + CoA = (R)-carnitinyl-CoA + AMP + diphosphate. The protein operates within amine and polyamine metabolism; carnitine metabolism. Functionally, catalyzes the transfer of CoA to carnitine, generating the initial carnitinyl-CoA needed for the CaiB reaction cycle. Also has activity toward crotonobetaine and gamma-butyrobetaine. The polypeptide is Crotonobetaine/carnitine--CoA ligase (Shigella flexneri).